The following is a 365-amino-acid chain: GTPase Obg (365 aa).

One can recognise an Obg domain in the interval 1–159 (MKFIDEARIE…RMLKLELKVL (159 aa)). An OBG-type G domain is found at 160–334 (ADVGLLGMPN…LVYAIKDHLA (175 aa)). GTP is bound by residues 166–173 (GMPNAGKS), 191–195 (FTTLH), 213–216 (DIPG), 284–287 (NKLD), and 315–317 (SAL). Residues Ser173 and Thr193 each coordinate Mg(2+).

Belongs to the TRAFAC class OBG-HflX-like GTPase superfamily. OBG GTPase family. As to quaternary structure, monomer. Mg(2+) is required as a cofactor.

It is found in the cytoplasm. Functionally, an essential GTPase which binds GTP, GDP and possibly (p)ppGpp with moderate affinity, with high nucleotide exchange rates and a fairly low GTP hydrolysis rate. Plays a role in control of the cell cycle, stress response, ribosome biogenesis and in those bacteria that undergo differentiation, in morphogenesis control. This is GTPase Obg from Cupriavidus metallidurans (strain ATCC 43123 / DSM 2839 / NBRC 102507 / CH34) (Ralstonia metallidurans).